The following is a 525-amino-acid chain: cAMP-dependent protein kinase regulatory subunit (525 aa).

The dimerization and phosphorylation stretch occupies residues 28 to 213 (QFCANWFNSK…RIRGSIGNNL (186 aa)). Disordered stretches follow at residues 114 to 146 (MDAS…SSLG) and 170 to 196 (SVSA…TVIP). Residues 124-146 (PAPATPAAPAAPAAPAAPFSSLG) show a composition bias toward low complexity. Phosphoserine; by autocatalysis is present on S170. A nucleoside 3',5'-cyclic phosphate-binding positions include 214 to 345 (LFRN…FLMD) and 348 to 472 (LFER…TYGD). Positions 295, 304, and 417 each coordinate 3',5'-cyclic AMP. The segment at 497 to 525 (SGADTSFPHPMDSSAKPGEGAWSAPNPFA) is disordered.

It belongs to the cAMP-dependent kinase regulatory chain family. Tetramer, composed of 2 regulatory (R) and 2 catalytic (C) subunits. In the presence of cAMP it dissociates into 2 active monomeric C subunits and an R dimer.

The polypeptide is cAMP-dependent protein kinase regulatory subunit (PKAR) (Mycosarcoma maydis (Corn smut fungus)).